Consider the following 685-residue polypeptide: Mannan-binding lectin serine protease 2 (685 aa).

Positions 1 to 19 (MRLLIFLGLLWSLVATLLG) are cleaved as a signal peptide. In terms of domain architecture, CUB 1 spans 20–137 (SKWPEPVFGR…TGFEAFYAAE (118 aa)). Residues E67 and D75 each contribute to the Ca(2+) site. C72 and C90 are oxidised to a cystine. An N-linked (GlcNAc...) asparagine glycan is attached at N103. Ca(2+) contacts are provided by D120, S122, N123, D138, and E141. The 44-residue stretch at 138-181 (DVDECRVSLGDSVPCDHYCHNYLGGYYCSCRAGYVLHQNKHTCS) folds into the EGF-like; calcium-binding domain. Intrachain disulfides connect C142–C156, C152–C165, C167–C180, C184–C211, and C241–C259. Ca(2+)-binding residues include N158 and G162. Residue N158 is modified to (3R)-3-hydroxyasparagine. Positions 184 to 296 (CSGQVFTGRS…TGWKIHYTST (113 aa)) constitute a CUB 2 domain. 2 N-linked (GlcNAc...) asparagine glycosylation sites follow: N285 and N308. 2 Sushi domains span residues 298-363 (RPCP…ECSI) and 364-431 (IDCG…VCEP). Cystine bridges form between C300–C348, C328–C361, C366–C411, C396–C429, C433–C552, C598–C617, and C628–C659. Positions 444 to 683 (IVGGQPAKPG…YIPWIENIIS (240 aa)) constitute a Peptidase S1 domain. Catalysis depends on charge relay system residues H483 and D532. N-linked (GlcNAc...) asparagine glycosylation occurs at N545. The Charge relay system role is filled by S632. An N-linked (GlcNAc...) asparagine glycan is attached at N641.

Belongs to the peptidase S1 family. As to quaternary structure, homodimer; disulfide-linked. Binds MBL2. Isoform 2 binds to MASP1. Binds SERPING1. In terms of processing, the iron and 2-oxoglutarate dependent 3-hydroxylation of aspartate and asparagine is (R) stereospecific within EGF domains. In terms of tissue distribution, plasma.

Its subcellular location is the secreted. It catalyses the reaction Selective cleavage after Arg-223 in complement component C2 (-Ser-Leu-Gly-Arg-|-Lys-Ile-Gln-Ile) and after Arg-76 in complement component C4 (-Gly-Leu-Gln-Arg-|-Ala-Leu-Glu-Ile).. In terms of biological role, serum protease that plays an important role in the activation of the complement system via mannose-binding lectin. After activation by auto-catalytic cleavage it cleaves C2 and C4, leading to their activation and to the formation of C3 convertase. This chain is Mannan-binding lectin serine protease 2 (Masp2), found in Mus musculus (Mouse).